The sequence spans 215 residues: Cytochrome b6 (215 aa).

The chain crosses the membrane as a helical span at residues 32–52 (IFYCLGGITLTCFLVQVATGF). Cysteine 35 contacts heme c. The heme b site is built by histidine 86 and histidine 100. 3 consecutive transmembrane segments (helical) span residues 90–110 (ASMMVLMMILHVFRVYLTGGF), 116–136 (LTWVTGVVLGVLTASFGVTGY), and 186–206 (LHTFVLPLLTAVFMLMHFSMI). Heme b contacts are provided by histidine 187 and histidine 202.

Belongs to the cytochrome b family. PetB subfamily. In terms of assembly, the 4 large subunits of the cytochrome b6-f complex are cytochrome b6, subunit IV (17 kDa polypeptide, PetD), cytochrome f and the Rieske protein, while the 4 small subunits are PetG, PetL, PetM and PetN. The complex functions as a dimer. It depends on heme b as a cofactor. Heme c is required as a cofactor.

The protein resides in the plastid. It is found in the chloroplast thylakoid membrane. In terms of biological role, component of the cytochrome b6-f complex, which mediates electron transfer between photosystem II (PSII) and photosystem I (PSI), cyclic electron flow around PSI, and state transitions. The chain is Cytochrome b6 from Lotus japonicus (Lotus corniculatus var. japonicus).